The chain runs to 464 residues: UDP-N-acetylmuramate--L-alanine ligase (464 aa).

117-123 contributes to the ATP binding site; the sequence is GTHGKTT.

The protein belongs to the MurCDEF family.

The protein resides in the cytoplasm. The enzyme catalyses UDP-N-acetyl-alpha-D-muramate + L-alanine + ATP = UDP-N-acetyl-alpha-D-muramoyl-L-alanine + ADP + phosphate + H(+). It participates in cell wall biogenesis; peptidoglycan biosynthesis. Cell wall formation. In Streptomyces avermitilis (strain ATCC 31267 / DSM 46492 / JCM 5070 / NBRC 14893 / NCIMB 12804 / NRRL 8165 / MA-4680), this protein is UDP-N-acetylmuramate--L-alanine ligase.